A 392-amino-acid chain; its full sequence is 5-azacytidine-induced protein 2 (392 aa).

A homodimerization region spans residues 1 to 197; sequence MDALVEDDIC…IELQKAKQTD (197 aa). 2 coiled-coil regions span residues 40–76 and 102–196; these read ALVT…LIAR and DRDN…AKQT. Positions 216–257 are interaction with TBK1 and IKBKE; the sequence is SDNMQHAYWELKREMSNLHLVTQVQAELLRKLKTSTAIKKAC. Phosphoserine is present on residues Ser318 and Ser353.

Homodimer. Interacts with IKBKE. Interacts with TBK1. Interacts with TICAM1. Interacts with TAX1BP1. Interacts with CALCOCO2. In terms of assembly, (Microbial infection) Interacts with vaccinia virus protein C6. In terms of processing, ubiquitinated via 'Lys-48'-linked polyubiquitination by TRIM38, leading to its degradation. Widely expressed. Abundant expression seen in the pancreas and testis.

It localises to the cytoplasm. Functionally, adapter protein which binds TBK1 and IKBKE playing a role in antiviral innate immunity. Activates serine/threonine-protein kinase TBK1 and facilitates its oligomerization. Enhances the phosphorylation of NF-kappa-B p65 subunit RELA by TBK1. Promotes TBK1-induced as well as TNF-alpha or PMA-induced activation of NF-kappa-B. Participates in IFNB promoter activation via TICAM1. This is 5-azacytidine-induced protein 2 (AZI2) from Homo sapiens (Human).